A 187-amino-acid chain; its full sequence is Thermosensitive gluconokinase (187 aa).

10–17 (GVSGSGKT) contacts ATP.

Belongs to the gluconokinase GntK/GntV family.

It catalyses the reaction D-gluconate + ATP = 6-phospho-D-gluconate + ADP + H(+). The protein operates within carbohydrate acid metabolism; L-idonate degradation. This chain is Thermosensitive gluconokinase (idnK), found in Escherichia coli (strain K12).